Here is a 335-residue protein sequence, read N- to C-terminus: Phosphoserine phosphatase RsbU (335 aa).

The region spanning 123–333 (DIGAISVPAK…DDFTLIVLRR (211 aa)) is the PPM-type phosphatase domain.

The enzyme catalyses O-phospho-L-serine + H2O = L-serine + phosphate. It carries out the reaction O-phospho-D-serine + H2O = D-serine + phosphate. Stimulated by a long-lived interaction with RsbT. Positive regulator of sigma-B activity. Dephosphorylates RsbV in response to environmental stress conveyed from the RsbXST module. The chain is Phosphoserine phosphatase RsbU (rsbU) from Bacillus subtilis (strain 168).